A 192-amino-acid chain; its full sequence is Peptidyl-tRNA hydrolase (192 aa).

Y17 contributes to the tRNA binding site. Residue H22 is the Proton acceptor of the active site. Residues F68, N70, and N116 each coordinate tRNA.

Belongs to the PTH family. As to quaternary structure, monomer.

It localises to the cytoplasm. The enzyme catalyses an N-acyl-L-alpha-aminoacyl-tRNA + H2O = an N-acyl-L-amino acid + a tRNA + H(+). Its function is as follows. Hydrolyzes ribosome-free peptidyl-tRNAs (with 1 or more amino acids incorporated), which drop off the ribosome during protein synthesis, or as a result of ribosome stalling. In terms of biological role, catalyzes the release of premature peptidyl moieties from peptidyl-tRNA molecules trapped in stalled 50S ribosomal subunits, and thus maintains levels of free tRNAs and 50S ribosomes. The chain is Peptidyl-tRNA hydrolase from Hydrogenovibrio crunogenus (strain DSM 25203 / XCL-2) (Thiomicrospira crunogena).